The chain runs to 564 residues: MFS-type transporter dmxR4 (564 aa).

Positions 1–61 (MSSERPDGSA…PAKEAPAKPA (61 aa)) are disordered. The segment covering 25–44 (TDSSRTSNDASQTSQDTAVQ) has biased composition (polar residues). The span at 47–57 (PPKEAPAKEAP) shows a compositional bias: basic and acidic residues. 5 helical membrane passes run 71 to 91 (IALL…DRSI), 106 to 126 (AGDI…FQLL), 138 to 158 (TVFV…GAAP), 169 to 189 (LAGI…VFLI), and 199 to 219 (GLFG…GGGF). N222 carries N-linked (GlcNAc...) asparagine glycosylation. 7 helical membrane-spanning segments follow: residues 227–247 (WCFY…ALWM), 265–285 (GLDL…LLAL), 299–319 (IIAL…LQAF), 348–368 (GVHL…GGFF), 376–396 (SPLA…IYTF), 405–425 (WIGS…APNL), and 438–458 (SALA…VSVG). N469 is a glycosylation site (N-linked (GlcNAc...) asparagine). Transmembrane regions (helical) follow at residues 470 to 490 (LSWI…VSFL) and 512 to 532 (VFMI…SMEW). The tract at residues 534–564 (SVKSRGSWDEKPAAKPTDKPTEEKKVPPEAV) is disordered. Basic and acidic residues predominate over residues 539–564 (GSWDEKPAAKPTDKPTEEKKVPPEAV).

It belongs to the major facilitator superfamily. TCR/Tet family.

The protein resides in the membrane. In terms of biological role, MFS-type transporter; part of the gene cluster that mediates the biosynthesis of the dimeric xanthones cryptosporioptides. This Cryptosporiopsis sp. (strain 8999) protein is MFS-type transporter dmxR4.